Consider the following 285-residue polypeptide: Sulfotransferase 2A2 (285 aa).

Residues lysine 44, serine 45, glycine 46, threonine 47, asparagine 48, and tryptophan 49 each contribute to the 3'-phosphoadenylyl sulfate site. Catalysis depends on histidine 99, which acts as the Proton acceptor. Positions 121, 129, 184, 218, 223, 247, 248, and 249 each coordinate 3'-phosphoadenylyl sulfate.

It belongs to the sulfotransferase 1 family.

The protein resides in the cytoplasm. It carries out the reaction an alcohol + 3'-phosphoadenylyl sulfate = an alkyl sulfate + adenosine 3',5'-bisphosphate + H(+). Functionally, sulfotransferase that utilizes 3'-phospho-5'-adenylyl sulfate (PAPS) as sulfonate donor to catalyze the sulfate conjugation of a potential wide variety of acceptor molecules bearing a hydroxyl group. Sulfonation increases the water solubility of most compounds, and therefore their renal excretion, but it can also result in bioactivation to form active metabolites. The sequence is that of Sulfotransferase 2A2 from Mus musculus (Mouse).